The chain runs to 563 residues: Probable lysosomal cobalamin transporter (563 aa).

Helical transmembrane passes span 8-28 (LIWFAYLIVITVLIVVASVFI), 40-60 (FVTFMCVFSIAALLATVMLLP), 95-115 (VIYYSLYFLDALLCLVGIPFA), 144-164 (YTLAFIAVVIALVLVGFFAPM), and 188-208 (AFTFLLGFVTTIGSCLYVFYT). An N-linked (GlcNAc...) asparagine glycan is attached at N228. Helical transmembrane passes span 314–334 (GGFSLFLVGLSTWISLLMTVI), 374–394 (IIFALIVFLFFWGSVVGVVAV), 416–436 (MLLATAMLTLITLGLNYSVVM), and 506–526 (FGALLLWAHFLFLGIYLVILV). The tract at residues 537-563 (ERQLDEDAEEAEEESLLASTGRSGNPT) is disordered. Over residues 539–551 (QLDEDAEEAEEES) the composition is skewed to acidic residues.

This sequence belongs to the LIMR family. LMBRD1 subfamily.

It localises to the lysosome membrane. Its function is as follows. Probable lysosomal cobalamin transporter. Required to export cobalamin from lysosomes allowing its conversion to cofactors. The chain is Probable lysosomal cobalamin transporter from Neosartorya fischeri (strain ATCC 1020 / DSM 3700 / CBS 544.65 / FGSC A1164 / JCM 1740 / NRRL 181 / WB 181) (Aspergillus fischerianus).